The primary structure comprises 291 residues: Taste receptor type 2 member 16 (291 aa).

Residue M1 is a topological domain, extracellular. Residues I2 to I22 form a helical membrane-spanning segment. Over V23–R41 the chain is Cytoplasmic. The helical transmembrane segment at L42–A62 threads the bilayer. At S63–T84 the chain is on the extracellular side. The N-linked (GlcNAc...) asparagine glycan is linked to N80. The chain crosses the membrane as a helical span at residues W85 to I105. Over K106–L125 the chain is Cytoplasmic. Residues F126–I146 traverse the membrane as a helical segment. Residues G147–T182 are Extracellular-facing. A glycan (N-linked (GlcNAc...) asparagine) is linked at N163. The chain crosses the membrane as a helical span at residues V183–L203. Topologically, residues T204 to S228 are cytoplasmic. Residues L229–G249 traverse the membrane as a helical segment. At T250–W257 the chain is on the extracellular side. The chain crosses the membrane as a helical span at residues L258–L278. At S279 to C291 the chain is on the cytoplasmic side.

This sequence belongs to the G-protein coupled receptor T2R family. As to quaternary structure, interacts with RTP3 and RTP4.

It is found in the cell membrane. Receptor that may play a role in the perception of bitterness and is gustducin-linked. May play a role in sensing the chemical composition of the gastrointestinal content. The activity of this receptor may stimulate alpha gustducin, mediate PLC-beta-2 activation and lead to the gating of TRPM5. This Gorilla gorilla gorilla (Western lowland gorilla) protein is Taste receptor type 2 member 16 (TAS2R16).